Here is a 121-residue protein sequence, read N- to C-terminus: Small ribosomal subunit protein uS13 (121 aa).

The disordered stretch occupies residues Gly-94–Lys-121. Over residues Ala-106–Lys-121 the composition is skewed to basic residues.

Belongs to the universal ribosomal protein uS13 family. Part of the 30S ribosomal subunit. Forms a loose heterodimer with protein S19. Forms two bridges to the 50S subunit in the 70S ribosome.

Located at the top of the head of the 30S subunit, it contacts several helices of the 16S rRNA. In the 70S ribosome it contacts the 23S rRNA (bridge B1a) and protein L5 of the 50S subunit (bridge B1b), connecting the 2 subunits; these bridges are implicated in subunit movement. Contacts the tRNAs in the A and P-sites. This Anoxybacillus flavithermus (strain DSM 21510 / WK1) protein is Small ribosomal subunit protein uS13.